A 104-amino-acid polypeptide reads, in one-letter code: L-rhamnose mutarotase (104 aa).

Residue Tyr18 participates in substrate binding. His22 acts as the Proton donor in catalysis. Substrate is bound by residues Tyr41 and 76–77; that span reads WW.

Belongs to the rhamnose mutarotase family. As to quaternary structure, homodimer.

The protein resides in the cytoplasm. The catalysed reaction is alpha-L-rhamnose = beta-L-rhamnose. Its pathway is carbohydrate metabolism; L-rhamnose metabolism. Its function is as follows. Involved in the anomeric conversion of L-rhamnose. In Burkholderia orbicola (strain MC0-3), this protein is L-rhamnose mutarotase.